We begin with the raw amino-acid sequence, 512 residues long: Cobyric acid synthase (512 aa).

A GATase cobBQ-type domain is found at 251–451; the sequence is ALDITVIRLP…IHGLFDSANF (201 aa). Cys-332 acts as the Nucleophile in catalysis. His-443 is a catalytic residue.

The protein belongs to the CobB/CobQ family. CobQ subfamily.

The protein operates within cofactor biosynthesis; adenosylcobalamin biosynthesis. Its function is as follows. Catalyzes amidations at positions B, D, E, and G on adenosylcobyrinic A,C-diamide. NH(2) groups are provided by glutamine, and one molecule of ATP is hydrogenolyzed for each amidation. The chain is Cobyric acid synthase from Photorhabdus laumondii subsp. laumondii (strain DSM 15139 / CIP 105565 / TT01) (Photorhabdus luminescens subsp. laumondii).